A 212-amino-acid chain; its full sequence is Large ribosomal subunit protein uL3 (212 aa).

A compositionally biased stretch (basic residues) spans 128 to 146 (RHGASRGPMKHGSKYHRRT). The segment at 128–164 (RHGASRGPMKHGSKYHRRTGSLGAKGPARVFKGRNLP) is disordered.

It belongs to the universal ribosomal protein uL3 family. In terms of assembly, part of the 50S ribosomal subunit. Forms a cluster with proteins L14 and L19.

In terms of biological role, one of the primary rRNA binding proteins, it binds directly near the 3'-end of the 23S rRNA, where it nucleates assembly of the 50S subunit. In Desulfitobacterium hafniense (strain Y51), this protein is Large ribosomal subunit protein uL3.